The primary structure comprises 355 residues: 3-isopropylmalate dehydrogenase (355 aa).

The substrate site is built by arginine 98, arginine 108, arginine 132, and aspartate 223. Residues aspartate 223, aspartate 247, and aspartate 251 each coordinate Mg(2+). 283–295 contacts NAD(+); sequence GSAPDIAGQQKAD.

It belongs to the isocitrate and isopropylmalate dehydrogenases family. LeuB type 2 subfamily. Homodimer. It depends on Mg(2+) as a cofactor. Requires Mn(2+) as cofactor.

The protein localises to the cytoplasm. The enzyme catalyses (2R,3S)-3-isopropylmalate + NAD(+) = 4-methyl-2-oxopentanoate + CO2 + NADH. Its pathway is amino-acid biosynthesis; L-leucine biosynthesis; L-leucine from 3-methyl-2-oxobutanoate: step 3/4. Functionally, catalyzes the oxidation of 3-carboxy-2-hydroxy-4-methylpentanoate (3-isopropylmalate) to 3-carboxy-4-methyl-2-oxopentanoate. The product decarboxylates to 4-methyl-2 oxopentanoate. This Clavibacter sepedonicus (Clavibacter michiganensis subsp. sepedonicus) protein is 3-isopropylmalate dehydrogenase.